A 688-amino-acid chain; its full sequence is Probable glucan endo-1,3-beta-glucosidase btgC (688 aa).

3 disordered regions span residues 1–91 (MSGP…NLGP), 126–148 (ANIP…PEPP), and 168–195 (GQLT…IPYQ). The Cytoplasmic portion of the chain corresponds to 1 to 307 (MSGPNRTYSF…PKPGGGNKKR (307 aa)). Residues 175-188 (SVSHLSSTNPSQRN) are compositionally biased toward polar residues. A helical; Signal-anchor for type II membrane protein membrane pass occupies residues 308 to 328 (GWIVGAILAFIIIGAIVGGAV). The Extracellular segment spans residues 329–688 (GGTIGHRGNE…IPDCGGKTAT (360 aa)). The tract at residues 334 to 363 (HRGNEEPSSASSASSSSTQTATEDTSVNGD) is disordered. Residues 341-355 (SSASSASSSSTQTAT) show a composition bias toward low complexity. 3 N-linked (GlcNAc...) asparagine glycosylation sites follow: Asn-408, Asn-431, and Asn-459. Glu-491 (proton donor) is an active-site residue. Glu-590 acts as the Nucleophile in catalysis. N-linked (GlcNAc...) asparagine glycans are attached at residues Asn-609 and Asn-635.

This sequence belongs to the glycosyl hydrolase 17 family.

Its subcellular location is the cell membrane. It carries out the reaction Hydrolysis of (1-&gt;3)-beta-D-glucosidic linkages in (1-&gt;3)-beta-D-glucans.. Glucanases play a role in cell expansion during growth, in cell-cell fusion during mating, and in spore release during sporulation. This enzyme may be involved in beta-glucan degradation. Active on laminarin and lichenan. The polypeptide is Probable glucan endo-1,3-beta-glucosidase btgC (btgC) (Aspergillus fumigatus (strain ATCC MYA-4609 / CBS 101355 / FGSC A1100 / Af293) (Neosartorya fumigata)).